A 508-amino-acid chain; its full sequence is Gasdermin-C (508 aa).

Residues 1–257 (MPSMLERISK…VGYCAARSEG (257 aa)) form a triggers pyroptosis region.

It belongs to the gasdermin family. In terms of assembly, homooligomer; homooligomeric ring-shaped pore complex containing 27-28 subunits when inserted in the membrane. Post-translationally, cleavage by CASP8 relieves autoinhibition by releasing the N-terminal moiety (Gasdermin-C, N-terminal) that initiates pyroptosis. The cleavage site is unclear. According to a publication, it takes place after Asp-240 in response to alpha-ketoglutarate. Another paper reports cleavage by CASP8 after Asp-365. Palmitoylated. Expressed mainly in trachea and spleen. In the esophagus, expressed in differentiating cells and probably in differentiated cells. Also detected in gastric epithelium.

The protein resides in the cytoplasm. Its subcellular location is the cytosol. The protein localises to the cell membrane. Its activity is regulated as follows. The full-length protein before cleavage is inactive: intramolecular interactions between N- and C-terminal domains mediate autoinhibition in the absence of activation signal. The intrinsic pyroptosis-inducing activity is carried by the released N-terminal moiety (Gasdermin-C, N-terminal) following cleavage by caspase CASP8. In terms of biological role, this form constitutes the precursor of the pore-forming protein: upon cleavage, the released N-terminal moiety (Gasdermin-C, N-terminal) binds to membranes and forms pores, triggering pyroptosis. Pore-forming protein that causes membrane permeabilization and pyroptosis. Produced by the cleavage of gasdermin-C by caspase CASP8 in response to death signals. After cleavage, moves to the plasma membrane where it strongly binds to membrane inner leaflet lipids. Homooligomerizes within the membrane and forms pores of 10-15 nanometers (nm) of inner diameter, triggering pyroptosis. In Homo sapiens (Human), this protein is Gasdermin-C.